Consider the following 314-residue polypeptide: Synaptophysin (314 aa).

At 1–25 (MLLLADMDVVNQLVAGGQFRVVKEP) the chain is on the cytoplasmic side. The MARVEL domain occupies 21 to 228 (VVKEPLGFVK…NLWFVFKETG (208 aa)). A helical membrane pass occupies residues 26–49 (LGFVKVLQWVFAIFAFATCGSYTG). At 50 to 107 (ELRLSVECANKTESALNIEVEFEYPFRLHQVYFDAPSCVKGGTTKIFLVGDYSSSAEF) the chain is on the vesicular side. An N-linked (GlcNAc...) asparagine glycan is attached at N59. Y81 is subject to Phosphotyrosine. Residues 108–131 (FVTVAVFAFLYSMGALATYIFLQN) form a helical membrane-spanning segment. The Cytoplasmic segment spans residues 132-138 (KYRENNK). The chain crosses the membrane as a helical span at residues 139–162 (GPMMDFLATAVFAFMWLVSSSAWA). At 163–200 (KGLSDVKMATDPENIIKEMPMCRQTGNTCKELRDPVTS) the chain is on the vesicular side. The chain crosses the membrane as a helical span at residues 201 to 224 (GLNTSVVFGFLNLVLWVGNLWFVF). The Cytoplasmic segment spans residues 225–314 (KETGWAAPFM…GAPTSFSNQM (90 aa)). Position 227 is a phosphothreonine (T227). Positions 239–314 (GAPEKQPAPG…GAPTSFSNQM (76 aa)) are disordered. Over residues 254-264 (AGYGQGPGGYG) the composition is skewed to gly residues. The segment at 255–305 (GYGQGPGGYGPQDSYGPQGGYQPDYGQPASGGGGGYGPQGDYGQQGYGQQG) is repeats, Gly-rich. Residues 265–282 (PQDSYGPQGGYQPDYGQP) show a composition bias toward low complexity. 2 positions are modified to phosphotyrosine: Y279 and Y296. Over residues 283-303 (ASGGGGGYGPQGDYGQQGYGQ) the composition is skewed to gly residues.

The protein belongs to the synaptophysin/synaptobrevin family. As to quaternary structure, homohexamer or homotetramer. Interacts with SRCIN1. Interacts with VAMP2; the interaction is inhibited by interaction of VAPM2 with SEPT8. In terms of processing, ubiquitinated; mediated by SIAH1 or SIAH2 and leading to its subsequent proteasomal degradation. Post-translationally, phosphorylated by SRC.

Its subcellular location is the cytoplasmic vesicle. It localises to the secretory vesicle. It is found in the synaptic vesicle membrane. The protein localises to the synapse. The protein resides in the synaptosome. In terms of biological role, possibly involved in structural functions as organizing other membrane components or in targeting the vesicles to the plasma membrane. Involved in the regulation of short-term and long-term synaptic plasticity. The protein is Synaptophysin (Syp) of Mus musculus (Mouse).